The sequence spans 131 residues: uncharacterized protein (131 aa).

It localises to the mitochondrion. This is an uncharacterized protein from Arabidopsis thaliana (Mouse-ear cress).